A 302-amino-acid polypeptide reads, in one-letter code: Ribosomal protein L11 methyltransferase (302 aa).

The S-adenosyl-L-methionine site is built by threonine 155, glycine 176, aspartate 198, and asparagine 239.

It belongs to the methyltransferase superfamily. PrmA family.

The protein localises to the cytoplasm. It carries out the reaction L-lysyl-[protein] + 3 S-adenosyl-L-methionine = N(6),N(6),N(6)-trimethyl-L-lysyl-[protein] + 3 S-adenosyl-L-homocysteine + 3 H(+). In terms of biological role, methylates ribosomal protein L11. This is Ribosomal protein L11 methyltransferase from Caldicellulosiruptor saccharolyticus (strain ATCC 43494 / DSM 8903 / Tp8T 6331).